Consider the following 105-residue polypeptide: Immunoglobulin lambda-like polypeptide 1 (105 aa).

A c region region spans residues 1–105 (QPKSDPLVTL…EKSVSPAECS (105 aa)). Residues 6–100 (PLVTLFLPSL…EGNTVEKSVS (95 aa)) form the Ig-like C1-type domain. A disulfide bond links Cys27 and Cys86.

Associates non-covalently with VPREB1A. Interacts with SYNV1/HRD1 (via N-terminus); this interaction leads to increased IGLL1 ubiquitination and degradation in pre-B cells, possibly through a lysosomal, not proteasomal, pathway.

The protein resides in the endoplasmic reticulum. It is found in the secreted. Its function is as follows. Critical for B-cell development. The sequence is that of Immunoglobulin lambda-like polypeptide 1 (Igll1) from Mus spretus (Western Mediterranean mouse).